A 327-amino-acid chain; its full sequence is Asnovolin J 5',6'-dehydrogenase nvfM (327 aa).

Residues 9–29 (VAIVGASGVTGGSIVNGLLAL) form a helical membrane-spanning segment. NADP(+) contacts are provided by residues 13-19 (GASGVTG) and Lys47. Lys130 serves as the catalytic Proton acceptor.

Belongs to the NmrA-type oxidoreductase family.

It localises to the membrane. The catalysed reaction is asnovolin K + AH2 = asnovolin A + A. It carries out the reaction chermesin D methyl ester + AH2 = asnovolin J + A. It participates in secondary metabolite biosynthesis; terpenoid biosynthesis. In terms of biological role, asnovolin J 5',6'-dehydrogenase; part of the gene cluster that mediates the biosynthesis of novofumigatonin, a heavily oxygenated meroterpenoid containing a unique orthoester moiety. The first step of the pathway is the synthesis of 3,5-dimethylorsellinic acid (DMOA) by the polyketide synthase nvfA via condensation of one acetyl-CoA starter unit with 3 malonyl-CoA units and 2 methylations. DMOA is then converted to farnesyl-DMOA by the farnesyltransferase nvfB. Epoxydation by FAD-dependent monooxygenase nvfK, followed by a protonation-initiated cyclization catalyzed by the terpene cyclase nvfL leads to the production of asnavolin H. The short chain dehydrogenase nvfC then as a 3-OH dehydrogenase of asnovolin H to yield chemesin D. There are two branches to synthesize asnovolin A from chemesin D. In one branch, chemesin D undergoes Baeyer-Villiger oxidation by nvfH, methylation by nvfJ, and enoyl reduction by the nvfM D enoylreductase that reduces the double bond between C-5'and C-6', to form respectively asnovolin I, asnovolin K, and asnovolin A. In the other branch, the methylation precedes the Baeyer-Villiger oxidation and the enoyl reduction to yield asnovolin A via the asnovolin J intermediate. Asnovolin A is further converted to fumigatonoid A by the Fe(II)/2-oxoglutarate-dependent dioxygenase nvfI that catalyzes an endoperoxidation reaction. The alpha/beta hydrolase nvfD then acts as an epimerase that converts fumigatonoid A to its C-5' epimer, which then undergoes spontaneous or nvfD-catalyzed lactonization. The following step utilizes the ketoreductase nvfG to produce fumigatonoid B. The dioxygenase nvfE further converts fumigatonoid B into fumigatonoid C. Finally the Fe(II)/2-oxoglutarate-dependent dioxygenase nvfF catalyzes two rounds of oxidation to transform fumigatonoid C into the end product, novofumigatonin A. The protein is Asnovolin J 5',6'-dehydrogenase nvfM of Aspergillus novofumigatus (strain IBT 16806).